A 66-amino-acid polypeptide reads, in one-letter code: MPKMKTHRASAKRFKRTANGGLKRHHAFTGHRFHGKTKKQRRHLRKAAMVSRSDIKRIKQMLAQMH.

The tract at residues 1–23 (MPKMKTHRASAKRFKRTANGGLK) is disordered.

Belongs to the bacterial ribosomal protein bL35 family.

The polypeptide is Large ribosomal subunit protein bL35 (Lactobacillus helveticus (strain DPC 4571)).